Reading from the N-terminus, the 270-residue chain is Regulatory protein RecX (270 aa).

This sequence belongs to the RecX family.

It localises to the cytoplasm. Modulates RecA activity. The sequence is that of Regulatory protein RecX from Bacillus anthracis (strain A0248).